We begin with the raw amino-acid sequence, 348 residues long: Ribosomal RNA small subunit methyltransferase C (348 aa).

Belongs to the methyltransferase superfamily. RsmC family. In terms of assembly, monomer.

The protein resides in the cytoplasm. It carries out the reaction guanosine(1207) in 16S rRNA + S-adenosyl-L-methionine = N(2)-methylguanosine(1207) in 16S rRNA + S-adenosyl-L-homocysteine + H(+). Functionally, specifically methylates the guanine in position 1207 of 16S rRNA in the 30S particle. This is Ribosomal RNA small subunit methyltransferase C from Pectobacterium atrosepticum (strain SCRI 1043 / ATCC BAA-672) (Erwinia carotovora subsp. atroseptica).